The following is a 441-amino-acid chain: Glutamyl-tRNA reductase (441 aa).

Substrate is bound by residues 49-52 (TCNR), Ser-109, 114-116 (EGQ), and Gln-120. The active-site Nucleophile is Cys-50. 198-203 (GAGRMS) is an NADP(+) binding site.

It belongs to the glutamyl-tRNA reductase family. In terms of assembly, homodimer.

The enzyme catalyses (S)-4-amino-5-oxopentanoate + tRNA(Glu) + NADP(+) = L-glutamyl-tRNA(Glu) + NADPH + H(+). It participates in porphyrin-containing compound metabolism; protoporphyrin-IX biosynthesis; 5-aminolevulinate from L-glutamyl-tRNA(Glu): step 1/2. Its pathway is porphyrin-containing compound metabolism; chlorophyll biosynthesis. Functionally, catalyzes the NADPH-dependent reduction of glutamyl-tRNA(Glu) to glutamate 1-semialdehyde (GSA). This Prochlorococcus marinus (strain NATL1A) protein is Glutamyl-tRNA reductase.